We begin with the raw amino-acid sequence, 314 residues long: tRNA pseudouridine synthase B (314 aa).

Catalysis depends on Asp41, which acts as the Nucleophile.

It belongs to the pseudouridine synthase TruB family. Type 1 subfamily.

It carries out the reaction uridine(55) in tRNA = pseudouridine(55) in tRNA. In terms of biological role, responsible for synthesis of pseudouridine from uracil-55 in the psi GC loop of transfer RNAs. This chain is tRNA pseudouridine synthase B, found in Prochlorococcus marinus (strain NATL2A).